The primary structure comprises 337 residues: GDP-mannose transporter 1 (337 aa).

The Cytoplasmic portion of the chain corresponds to 1-16 (MSELKTGHAGHNPWAS). Residues 17 to 37 (VANSGPISILSYCGSSILMTV) traverse the membrane as a helical segment. Residues 38–51 (TNKFVVNLKDFNMN) lie on the Lumenal side of the membrane. The helical transmembrane segment at 52–72 (FVMLFVQSLVCTITLIILRIL) threads the bilayer. Residues 73-92 (GYAKFRSLNKTDAKNWFPIS) are Cytoplasmic-facing. The chain crosses the membrane as a helical span at residues 93–113 (FLLVLMIYTSSKALQYLAVPI). Over 114 to 119 (YTIFKN) the chain is Lumenal. An N-linked (GlcNAc...) asparagine glycan is attached at N119. A helical membrane pass occupies residues 120–140 (LTIILIAYGEVLFFGGSVTSM). The Cytoplasmic segment spans residues 141 to 144 (ELSS). Residues 145–165 (FLLMVLSSVVATWGDQQAVAA) traverse the membrane as a helical segment. Topologically, residues 166–180 (KAASLAEGAAGAVAS) are lumenal. The chain crosses the membrane as a helical span at residues 181–201 (FNPGYFWMFTNCITSALFVLI). Residues 202-215 (MRKRIKLTNFKDFD) lie on the Cytoplasmic side of the membrane. A helical membrane pass occupies residues 216-236 (TMFYNNVLALPILLLFSFCVE). Topologically, residues 237–252 (DWSSVNLTNNFSNDSL) are lumenal. Residues N242, N246, and N249 are each glycosylated (N-linked (GlcNAc...) asparagine). Residues 253–273 (TAMIISGVASVGISYCSGWCV) traverse the membrane as a helical segment. The Cytoplasmic portion of the chain corresponds to 274 to 279 (RVTSST). The chain crosses the membrane as a helical span at residues 280-300 (TYSMVGALNKLPIALSGLIFF). The Lumenal segment spans residues 301-304 (DAPR). A helical membrane pass occupies residues 305-325 (NFLSILSIFIGFLSGIIYAVA). Over 326 to 337 (KQKKQQAQPLRK) the chain is Cytoplasmic.

Belongs to the TPT transporter family. SLC35D subfamily. Homooligomer.

The protein resides in the golgi apparatus membrane. It localises to the cytoplasmic vesicle membrane. Its subcellular location is the endoplasmic reticulum membrane. Functionally, involved in the import of GDP-mannose from the cytoplasm into the Golgi lumen. Defective copy causes severe glycosylation defect and abnormal retention of soluble endoplasmic reticulum proteins. Involved in vanadate sensitivity. This is GDP-mannose transporter 1 (VRG4) from Saccharomyces cerevisiae (strain YJM789) (Baker's yeast).